Reading from the N-terminus, the 658-residue chain is Sulfate transporter 3.1 (658 aa).

Over Met1–Asp85 the chain is Cytoplasmic. A helical membrane pass occupies residues Leu86–Leu106. Residues Ala107–Asn108 are Extracellular-facing. The helical transmembrane segment at Leu109–Gly129 threads the bilayer. Topologically, residues Ser130–Asp133 are cytoplasmic. The chain crosses the membrane as a helical span at residues Leu134–Val154. Residues Asp155–Tyr163 are Extracellular-facing. A helical transmembrane segment spans residues Leu164–Phe184. Residue Arg185 is a topological domain, cytoplasmic. Residues Leu186–Ala206 form a helical membrane-spanning segment. The Extracellular segment spans residues Thr207–Trp245. The helical transmembrane segment at Glu246–Ile266 threads the bilayer. Residues Lys267–Phe271 lie on the Cytoplasmic side of the membrane. The chain crosses the membrane as a helical span at residues Phe272–Phe292. Residues Thr293–Gly332 lie on the Extracellular side of the membrane. Residues Leu333–Phe353 form a helical membrane-spanning segment. The Cytoplasmic segment spans residues Lys354–Glu363. Residues Met364 to Gly384 form a helical membrane-spanning segment. At Pro385–Lys398 the chain is on the extracellular side. The helical transmembrane segment at Thr399 to Pro419 threads the bilayer. Residues Leu420–Pro425 are Cytoplasmic-facing. Residues Leu426–Ala446 form a helical membrane-spanning segment. At Ile447–Tyr464 the chain is on the extracellular side. The chain crosses the membrane as a helical span at residues Val465–Ala485. Residues Arg486 to Val658 are Cytoplasmic-facing. One can recognise an STAS domain in the interval Gln513–Cys637.

It belongs to the SLC26A/SulP transporter (TC 2.A.53) family. Expressed only in leaves.

The protein localises to the membrane. Its function is as follows. H(+)/sulfate cotransporter that may play a role in the regulation of sulfate assimilation. In Arabidopsis thaliana (Mouse-ear cress), this protein is Sulfate transporter 3.1 (SULTR3;1).